The following is a 269-amino-acid chain: Formamidopyrimidine-DNA glycosylase (269 aa).

Proline 2 acts as the Schiff-base intermediate with DNA in catalysis. The active-site Proton donor is the glutamate 3. Lysine 57 functions as the Proton donor; for beta-elimination activity in the catalytic mechanism. Histidine 90, arginine 109, and lysine 150 together coordinate DNA. Residues arginine 235–valine 269 form an FPG-type zinc finger. Arginine 259 serves as the catalytic Proton donor; for delta-elimination activity.

The protein belongs to the FPG family. As to quaternary structure, monomer. The cofactor is Zn(2+).

The catalysed reaction is Hydrolysis of DNA containing ring-opened 7-methylguanine residues, releasing 2,6-diamino-4-hydroxy-5-(N-methyl)formamidopyrimidine.. The enzyme catalyses 2'-deoxyribonucleotide-(2'-deoxyribose 5'-phosphate)-2'-deoxyribonucleotide-DNA = a 3'-end 2'-deoxyribonucleotide-(2,3-dehydro-2,3-deoxyribose 5'-phosphate)-DNA + a 5'-end 5'-phospho-2'-deoxyribonucleoside-DNA + H(+). Involved in base excision repair of DNA damaged by oxidation or by mutagenic agents. Acts as a DNA glycosylase that recognizes and removes damaged bases. Has a preference for oxidized purines, such as 7,8-dihydro-8-oxoguanine (8-oxoG). Has AP (apurinic/apyrimidinic) lyase activity and introduces nicks in the DNA strand. Cleaves the DNA backbone by beta-delta elimination to generate a single-strand break at the site of the removed base with both 3'- and 5'-phosphates. This chain is Formamidopyrimidine-DNA glycosylase, found in Pectobacterium atrosepticum (strain SCRI 1043 / ATCC BAA-672) (Erwinia carotovora subsp. atroseptica).